The following is a 557-amino-acid chain: Vanadium-dependent bromoperoxidase (557 aa).

Pyrrolidone carboxylic acid is present on glutamine 1. Positions 1–22 (QTCSTSDDADDPTPPNERDDEA) are disordered. An intrachain disulfide couples cysteine 77 to cysteine 86. Vanadate contacts are provided by lysine 341 and arginine 349. Histidine 411 is an active-site residue. Residues serine 416, glycine 417, and histidine 418 each coordinate vanadate. Residue histidine 418 is part of the active site. Cysteines 441 and 462 form a disulfide. Vanadate is bound by residues arginine 480 and histidine 486. Cysteine 544 and cysteine 555 are joined by a disulfide.

Belongs to the vanadium-dependent haloperoxidase family. As to quaternary structure, homodimer; disulfide-linked. Vanadate is required as a cofactor.

The catalysed reaction is RH + Br(-) + H2O2 = RBr + 2 H2O.. Functionally, catalyzes the halogenation of organic substrates in the presence of hydrogen peroxide. The protein is Vanadium-dependent bromoperoxidase of Ascophyllum nodosum (Knotted wrack).